Consider the following 92-residue polypeptide: UPF0250 protein VC0395_A0469/VC395_0960 (92 aa).

Belongs to the UPF0250 family.

In Vibrio cholerae serotype O1 (strain ATCC 39541 / Classical Ogawa 395 / O395), this protein is UPF0250 protein VC0395_A0469/VC395_0960.